The sequence spans 522 residues: F-box only protein 7 (522 aa).

Residues 1–88 form a ubiquitin-like region; it reads MRLRVRLLKR…QDDIPAPNIP (88 aa). A disordered region spans residues 85 to 144; sequence PNIPSSTDSEHSSLQNNEQPSLATSSNQTSMQDEQPSDSFQGQAAQSGVWNDDSMLGPSQ. The segment covering 87–133 has biased composition (polar residues); that stretch reads IPSSTDSEHSSLQNNEQPSLATSSNQTSMQDEQPSDSFQGQAAQSGV. The segment at 92–129 is important for interaction with PINK1; it reads DSEHSSLQNNEQPSLATSSNQTSMQDEQPSDSFQGQAA. Residues 129–169 are important for interaction with CDK6; the sequence is AQSGVWNDDSMLGPSQNFEAESIQDNAHMAEGTGFYPSEPM. The important for dimerization and interaction with PSMF1 stretch occupies residues 180–324; it reads PHSLETLYQS…PLLAFTRQAL (145 aa). Positions 329–375 constitute an F-box domain; that stretch reads VFGLVVLPLELKLRIFRLLDVRSVLSLSAVCRDLFTASNDPLLWRFL. Residues 381–522 are important for interaction with CDK6; it reads RDNTVRVQDT…RPTDGRLSFM (142 aa). An omega-N-methylarginine mark is found at Arg-432 and Arg-451. The short motif at 481 to 484 is the RFDP motif element; the sequence is RFDP. The disordered stretch occupies residues 483-522; it reads DPVGPLPGPNPILPGRGGPNDRFPFRPSRGRPTDGRLSFM. Arg-518 is subject to Asymmetric dimethylarginine.

Part of the SCF (SKP1-CUL1-F-box) E3 ubiquitin-protein ligase complex SCF(FBXO7) formed of CUL1, SKP1, RBX1 and FBXO7. Interacts via its C-terminal proline-rich region with DLGAP5. Interacts with BIRC2. Interacts with CDK6 and promotes its interaction with D-type cyclin. Interacts with PSMF1. In terms of assembly, interacts (via the N-terminal Ubl domain) with PRKN. Interact (via N-terminal region) with PINK1. As to quaternary structure, interact (via N-terminal region) with PINK1.

It localises to the cytoplasm. Its subcellular location is the nucleus. The protein resides in the mitochondrion. The protein localises to the cytosol. It functions in the pathway protein modification; protein ubiquitination. Its function is as follows. Substrate recognition component of a SCF (SKP1-CUL1-F-box protein) E3 ubiquitin-protein ligase complex which mediates the ubiquitination and subsequent proteasomal degradation of target proteins and plays a role in several biological processes such as cell cycle, cell proliferation, or maintenance of chromosome stability. Recognizes and ubiquitinates BIRC2 and the cell cycle regulator DLGAP5. Plays a role downstream of PINK1 in the clearance of damaged mitochondria via selective autophagy (mitophagy) by targeting PRKN to dysfunctional depolarized mitochondria. Promotes MFN1 ubiquitination. Mediates the ubiquitination and proteasomal degradation of UXT isoform 2, thereby impairing the NF-kappa-B signaling pathway. Inhibits NF-kappa-B pathway also by promoting the ubiquitination of TRAF2. Affects the assembly state and activity of the proteasome in the cells including neurons by ubiquitinating the proteasomal subunit PSMA2 via 'Lys-63'-linked polyubiquitin chains. Promotes 'Lys-48'-linked polyubiquitination SIRT7, leading to the hydrogen peroxide-induced cell death. This Homo sapiens (Human) protein is F-box only protein 7 (FBXO7).